Here is a 667-residue protein sequence, read N- to C-terminus: UvrABC system protein B (667 aa).

The Helicase ATP-binding domain occupies 24-195 (EGLRRGDRFQ…SSGGVFHLRG (172 aa)). 37–44 (GVTGSGKT) contacts ATP. Positions 90–113 (YYDYYQPEAYIPTKDLYIEKDADI) match the Beta-hairpin motif. In terms of domain architecture, Helicase C-terminal spans 428 to 581 (QVDDFIEEVQ…QLMYNIEHDI (154 aa)). The UVR domain maps to 626–661 (EEYLALLEEEMWRASSELRYEDAAMLRDEMLRIKRE).

The protein belongs to the UvrB family. As to quaternary structure, forms a heterotetramer with UvrA during the search for lesions. Interacts with UvrC in an incision complex.

The protein localises to the cytoplasm. The UvrABC repair system catalyzes the recognition and processing of DNA lesions. A damage recognition complex composed of 2 UvrA and 2 UvrB subunits scans DNA for abnormalities. Upon binding of the UvrA(2)B(2) complex to a putative damaged site, the DNA wraps around one UvrB monomer. DNA wrap is dependent on ATP binding by UvrB and probably causes local melting of the DNA helix, facilitating insertion of UvrB beta-hairpin between the DNA strands. Then UvrB probes one DNA strand for the presence of a lesion. If a lesion is found the UvrA subunits dissociate and the UvrB-DNA preincision complex is formed. This complex is subsequently bound by UvrC and the second UvrB is released. If no lesion is found, the DNA wraps around the other UvrB subunit that will check the other stand for damage. The polypeptide is UvrABC system protein B (Kosmotoga olearia (strain ATCC BAA-1733 / DSM 21960 / TBF 19.5.1)).